Reading from the N-terminus, the 160-residue chain is Vesicle transport protein SFT2B (160 aa).

N-acetylmethionine is present on methionine 1. Topologically, residues 1–36 are cytoplasmic; the sequence is MDKLKKVLSGQDTEDRSGLSEVVEASSLSWSTRIKG. Phosphoserine is present on serine 9. The chain crosses the membrane as a helical span at residues 37–57; that stretch reads FIACFAIGILCSLLGTVLLWV. Residues 58–63 lie on the Lumenal side of the membrane; that stretch reads PRKGLH. Residues 64-84 form a helical membrane-spanning segment; it reads LFAVFYTFGNIASIGSTIFLM. Residues 85–98 lie on the Cytoplasmic side of the membrane; it reads GPVKQLKRMFEPTR. Residues 99–119 traverse the membrane as a helical segment; sequence LIATIMVLLCFALTLCSAFWW. Residues 120–123 lie on the Lumenal side of the membrane; sequence HNKG. The helical transmembrane segment at 124 to 144 threads the bilayer; that stretch reads LALIFCILQSLALTWYSLSFI. Residues 145–160 lie on the Cytoplasmic side of the membrane; that stretch reads PFARDAVKKCFAVCLA.

This sequence belongs to the SFT2 family.

The protein resides in the membrane. May be involved in fusion of retrograde transport vesicles derived from an endocytic compartment with the Golgi complex. In Homo sapiens (Human), this protein is Vesicle transport protein SFT2B.